Here is a 50-residue protein sequence, read N- to C-terminus: U-megalopygitoxin(9)-Mo13 (50 aa).

The first 23 residues, 1–23 (MKLVFLFFIVAVMVSLFVGMTEA), serve as a signal peptide directing secretion. The cysteines at positions 33 and 40 are disulfide-linked.

It belongs to the caterpillar 9 family. As to expression, expressed by the venom apparatus.

It is found in the secreted. Its function is as follows. Probable toxin. The chain is U-megalopygitoxin(9)-Mo13 from Megalopyge opercularis (Southern flannel moth).